A 325-amino-acid polypeptide reads, in one-letter code: Beta-ketoacyl-[acyl-carrier-protein] synthase III (325 aa).

Active-site residues include Cys-114 and His-252. The tract at residues 253-257 (QANFR) is ACP-binding. Asn-282 is an active-site residue.

Belongs to the thiolase-like superfamily. FabH family. In terms of assembly, homodimer.

It is found in the cytoplasm. It catalyses the reaction malonyl-[ACP] + acetyl-CoA + H(+) = 3-oxobutanoyl-[ACP] + CO2 + CoA. It participates in lipid metabolism; fatty acid biosynthesis. Catalyzes the condensation reaction of fatty acid synthesis by the addition to an acyl acceptor of two carbons from malonyl-ACP. Catalyzes the first condensation reaction which initiates fatty acid synthesis and may therefore play a role in governing the total rate of fatty acid production. Possesses both acetoacetyl-ACP synthase and acetyl transacylase activities. Its substrate specificity determines the biosynthesis of branched-chain and/or straight-chain of fatty acids. This is Beta-ketoacyl-[acyl-carrier-protein] synthase III from Novosphingobium aromaticivorans (strain ATCC 700278 / DSM 12444 / CCUG 56034 / CIP 105152 / NBRC 16084 / F199).